We begin with the raw amino-acid sequence, 150 residues long: MKVVVQRVKEASVTNDTLNNQIKKGYCLLVGIGQNSTEQDADVIAKKIANARLFEDDNNKLNFNIQQMNGEILSVSQFTLYADVKKGNRPGFSNSKNPDQAVKIYEYFNDALRAYGLTVKTGEFGTHMNVSINNDGPVTIIYESQDGKIQ.

The Gly-cisPro motif, important for rejection of L-amino acids motif lies at 136–137 (GP).

It belongs to the DTD family. Homodimer.

The protein resides in the cytoplasm. The enzyme catalyses glycyl-tRNA(Ala) + H2O = tRNA(Ala) + glycine + H(+). The catalysed reaction is a D-aminoacyl-tRNA + H2O = a tRNA + a D-alpha-amino acid + H(+). Its function is as follows. An aminoacyl-tRNA editing enzyme that deacylates mischarged D-aminoacyl-tRNAs. Also deacylates mischarged glycyl-tRNA(Ala), protecting cells against glycine mischarging by AlaRS. Acts via tRNA-based rather than protein-based catalysis; rejects L-amino acids rather than detecting D-amino acids in the active site. By recycling D-aminoacyl-tRNA to D-amino acids and free tRNA molecules, this enzyme counteracts the toxicity associated with the formation of D-aminoacyl-tRNA entities in vivo and helps enforce protein L-homochirality. This is D-aminoacyl-tRNA deacylase from Staphylococcus aureus (strain Mu50 / ATCC 700699).